A 115-amino-acid chain; its full sequence is NADH-ubiquinone oxidoreductase chain 3 (115 aa).

The next 3 helical transmembrane spans lie at Leu-3–Trp-23, Phe-55–Leu-75, and Leu-84–Tyr-104.

It belongs to the complex I subunit 3 family. As to quaternary structure, core subunit of respiratory chain NADH dehydrogenase (Complex I) which is composed of 45 different subunits. Interacts with TMEM186. Interacts with TMEM242.

The protein resides in the mitochondrion inner membrane. The catalysed reaction is a ubiquinone + NADH + 5 H(+)(in) = a ubiquinol + NAD(+) + 4 H(+)(out). Functionally, core subunit of the mitochondrial membrane respiratory chain NADH dehydrogenase (Complex I) which catalyzes electron transfer from NADH through the respiratory chain, using ubiquinone as an electron acceptor. Essential for the catalytic activity of complex I. The sequence is that of NADH-ubiquinone oxidoreductase chain 3 from Ailurus fulgens (Himalayan red panda).